A 299-amino-acid chain; its full sequence is N-acetylaspartate synthetase (299 aa).

Pro residues predominate over residues 44–57 (AAPGPAAAPPPAAG). Residues 44-70 (AAPGPAAAPPPAAGPQPHGGTGGAGPP) are disordered. Residues 60 to 70 (PHGGTGGAGPP) are compositionally biased toward gly residues. Residues 118–138 (YALLAALCFAVTRSLLLTCLV) form a helical membrane-spanning segment. The N-acetyltransferase domain maps to 143–280 (LALRYYYSRK…VLPGMTLSLA (138 aa)).

This sequence belongs to the NAT8 family. In terms of tissue distribution, expressed in brain, including in mesencephalic dopaminergic neurons of the substantia nigra and ventral tegmental area and oligodendrocytes. Expressed in cortical pyramidal neurons and granule cells of the hippocampus (at protein level).

The protein resides in the cytoplasm. It localises to the microsome membrane. Its subcellular location is the mitochondrion membrane. The protein localises to the endoplasmic reticulum membrane. The enzyme catalyses L-aspartate + acetyl-CoA = N-acetyl-L-aspartate + CoA + H(+). With respect to regulation, aminooxyacetic acid (AOAA) blocks its activity in both cytoplasm and mitochondria. Catalyzes the synthesis of N-acetylaspartate acid (NAA) from L-aspartate and acetyl-CoA. Promotes dopamine uptake by regulating TNF-alpha expression. Attenuates methamphetamine-induced inhibition of dopamine uptake. This Rattus norvegicus (Rat) protein is N-acetylaspartate synthetase (Nat8l).